Here is a 113-residue protein sequence, read N- to C-terminus: Biotrophy-associated secreted protein 3 (113 aa).

The first 20 residues, 1-20, serve as a signal peptide directing secretion; the sequence is MQFSTVSFAIFAILPAMVAA.

The protein localises to the secreted. Its function is as follows. Secreted effector involved in biotrophic colonization of plant cells. The sequence is that of Biotrophy-associated secreted protein 3 from Pyricularia oryzae (strain 70-15 / ATCC MYA-4617 / FGSC 8958) (Rice blast fungus).